A 414-amino-acid chain; its full sequence is Glutamyl-tRNA reductase (414 aa).

Residues 51–54 (TCNR), serine 107, 112–114 (EYE), and glutamine 118 each bind substrate. Cysteine 52 (nucleophile) is an active-site residue. 187–192 (GAGEIG) is a binding site for NADP(+).

It belongs to the glutamyl-tRNA reductase family. Homodimer.

The enzyme catalyses (S)-4-amino-5-oxopentanoate + tRNA(Glu) + NADP(+) = L-glutamyl-tRNA(Glu) + NADPH + H(+). The protein operates within porphyrin-containing compound metabolism; protoporphyrin-IX biosynthesis; 5-aminolevulinate from L-glutamyl-tRNA(Glu): step 1/2. Its function is as follows. Catalyzes the NADPH-dependent reduction of glutamyl-tRNA(Glu) to glutamate 1-semialdehyde (GSA). The sequence is that of Glutamyl-tRNA reductase from Sulfolobus acidocaldarius (strain ATCC 33909 / DSM 639 / JCM 8929 / NBRC 15157 / NCIMB 11770).